The primary structure comprises 400 residues: Deoxyguanosinetriphosphate triphosphohydrolase-like protein (400 aa).

An HD domain is found at 73–215 (RLTHSIEVSQ…AAIADDIAYN (143 aa)).

It belongs to the dGTPase family. Type 2 subfamily.

The sequence is that of Deoxyguanosinetriphosphate triphosphohydrolase-like protein from Bartonella quintana (strain Toulouse) (Rochalimaea quintana).